A 274-amino-acid chain; its full sequence is Undecaprenyl-diphosphatase (274 aa).

The next 6 membrane-spanning stretches (helical) occupy residues 44-64 (AKVF…LVYW), 85-105 (LNVV…GKMI), 109-129 (LFIP…ILWA), 185-205 (ATDF…AYSL), 214-234 (VADI…AWLC), and 247-267 (FIPF…TAWT).

The protein belongs to the UppP family.

The protein localises to the cell inner membrane. The catalysed reaction is di-trans,octa-cis-undecaprenyl diphosphate + H2O = di-trans,octa-cis-undecaprenyl phosphate + phosphate + H(+). Its function is as follows. Catalyzes the dephosphorylation of undecaprenyl diphosphate (UPP). Confers resistance to bacitracin. The protein is Undecaprenyl-diphosphatase of Variovorax paradoxus (strain S110).